The following is a 206-amino-acid chain: Probable chemoreceptor glutamine deamidase CheD 1 (206 aa).

It belongs to the CheD family.

It catalyses the reaction L-glutaminyl-[protein] + H2O = L-glutamyl-[protein] + NH4(+). Its function is as follows. Probably deamidates glutamine residues to glutamate on methyl-accepting chemotaxis receptors (MCPs), playing an important role in chemotaxis. The chain is Probable chemoreceptor glutamine deamidase CheD 1 from Shewanella oneidensis (strain ATCC 700550 / JCM 31522 / CIP 106686 / LMG 19005 / NCIMB 14063 / MR-1).